The chain runs to 355 residues: uncharacterized protein (355 aa).

This sequence belongs to the serpin family. Poxviruses subfamily.

This is an uncharacterized protein from Vertebrata (FPV).